The following is a 367-amino-acid chain: Cycloaraneosene synthase sdnA (367 aa).

A signal peptide spans 1 to 24; that stretch reads MSLYGLFTLATSYLPSVGGGAALA. Mg(2+)-binding residues include aspartate 115, asparagine 260, and serine 264. A DDXXD motif motif is present at residues 115 to 119; that stretch reads DDQFD. N-linked (GlcNAc...) asparagine glycosylation occurs at asparagine 276.

Belongs to the terpene synthase family. Mg(2+) serves as cofactor.

The enzyme catalyses (2E,6E,10E)-geranylgeranyl diphosphate = cycloaraneosene + diphosphate. Its pathway is antibiotic biosynthesis. Its function is as follows. Cycloaraneosene synthase; part of the gene cluster that mediates the biosynthesis of sordarin and hypoxysordarin, glycoside antibiotics with a unique tetracyclic diterpene aglycone structure. First, the geranylgeranyl diphosphate synthase sdnC constructs GGDP from farnesyl diphosphate and isopentenyl diphosphate. The diterpene cyclase sdnA then catalyzes the cyclization of GGDP to afford cycloaraneosene. Cycloaraneosene is then hydroxylated four times by the putative cytochrome P450 monooxygenases sdnB, sdnE, sdnF and sdnH to give a hydroxylated cycloaraneosene derivative such as cycloaraneosene-8,9,13,19-tetraol. Although the order of the hydroxylations is unclear, at least C8, C9 and C13 of the cycloaraneosene skeleton are hydroxylated before the sordaricin formation. Dehydration of the 13-hydroxy group of the hydroxylated cycloaraneosene derivative might be catalyzed by an unassigned hypothetical protein such as sdnG and sdnP to construct the cyclopentadiene moiety. The FAD-dependent oxidoreductase sdnN is proposed to catalyze the oxidation at C9 of the hydroxylated cycloaraneosene derivative and also catalyze the Baeyer-Villiger oxidation to give the lactone intermediate. The presumed lactone intermediate would be hydrolyzed to give an acrolein moiety and a carboxylate moiety. Then, [4+2]cycloaddition would occur between the acrolein moiety and the cyclopentadiene moiety to give sordaricin. SdnN might also be involved in the [4+2]cycloaddition after the hypothesized oxidation to accommodate the oxidized product and prompt the [4+2]cycloaddition. GDP-6-deoxy-D-altrose may be biosynthesized from GDP-D-mannose by the putative GDP-mannose-4,6-dehydratase sdnI and the short-chain dehydrogenase sdnK. The glycosyltransferase sdnJ catalyzes the attachment of 6-deoxy-D-altrose onto the 19-hydroxy group of sordaricin to give 4'-O-demethylsordarin. The methyltransferase sdnD would complete the biosynthesis of sordarin. Sordarin can be further modified into hypoxysordarin. The unique acyl chain at the 3'-hydroxy group of hypoxysordarin would be constructed by an iterative type I PKS sdnO and the trans-acting polyketide methyltransferase sdnL. SdnL would be responsible for the introduction of an alpha-methyl group of the polyketide chain. Alternatively, the beta-lactamase-like protein sdnR might be responsible for the cleavage and transfer of the polyketide chain from the PKS sdnO to sordarin. Two putative cytochrome P450 monooxygenases, sdnQ and sdnT, might catalyze the epoxidations of the polyketide chain to complete the biosynthesis of hypoxysordarin. Transcriptional regulators sdnM and sdnS are presumably encoded for the transcriptional regulation of the expression of the sdn gene cluster. This Sordaria araneosa (Pleurage araneosa) protein is Cycloaraneosene synthase sdnA.